The primary structure comprises 444 residues: MTLSETHPTARSEALFVRARAVTPGGVNSPVRAFRSVGGVPRFIASAQGAYLTDADGARYLDYIGSWGPMILGHNHPAVRDAVAQALASGTSFGAPNEREVELAELIVELTGAERVRFVSSGTEATMSALRLARGYTGRKFIVKFRGNYHGHADGLLVEAGSGLLTNAEGDLGAAAPSSAGVPEEYAGLTLVLDYNDPEALDALMAQRGDEIAAVIFEPVVGNAGVLIPTSDFLAALHRVRDFGAVLIADEVMTGFRLSLNGATGLLSLDPDLRCWGKIVGGGLPVGAYGGRADIMDFVSPQGPVYQAGTLSGNPLAMAAGIATLRELKANPGLYRQLDEYAARLAAGLRGAAERAGVAVSINHIGSMLTVFFQDAPDGSVRDYAAAARSDTAAFAAWFQGLLARGIYWAPSQFESIFISAAHGEPELAATLEAAAQAFEGVKP.

Position 278 is an N6-(pyridoxal phosphate)lysine (K278).

It belongs to the class-III pyridoxal-phosphate-dependent aminotransferase family. HemL subfamily. Homodimer. Pyridoxal 5'-phosphate serves as cofactor.

It localises to the cytoplasm. The enzyme catalyses (S)-4-amino-5-oxopentanoate = 5-aminolevulinate. The protein operates within porphyrin-containing compound metabolism; protoporphyrin-IX biosynthesis; 5-aminolevulinate from L-glutamyl-tRNA(Glu): step 2/2. The sequence is that of Glutamate-1-semialdehyde 2,1-aminomutase from Deinococcus radiodurans (strain ATCC 13939 / DSM 20539 / JCM 16871 / CCUG 27074 / LMG 4051 / NBRC 15346 / NCIMB 9279 / VKM B-1422 / R1).